The following is an 882-amino-acid chain: Exo-beta-D-glucosaminidase ARB_07888 (882 aa).

A signal peptide spans 1–21 (MWFVFRPAAIPALLLTLGVSA). A propeptide spanning residues 22–31 (LSPLRPLVST) is cleaved from the precursor. 6 N-linked (GlcNAc...) asparagine glycosylation sites follow: N86, N200, N234, N237, N287, and N442. The Proton donor role is filled by D466. The active-site Nucleophile is E538. Residues N688, N773, and N816 are each glycosylated (N-linked (GlcNAc...) asparagine).

Belongs to the glycosyl hydrolase 2 family. As to quaternary structure, monomer.

The protein resides in the secreted. The enzyme catalyses Hydrolysis of chitosan or chitosan oligosaccharides to remove successive D-glucosamine residues from the non-reducing termini.. Its function is as follows. Hydrolyzes chitosan and chitooligosaccharides with retention of anomeric configuration. This Arthroderma benhamiae (strain ATCC MYA-4681 / CBS 112371) (Trichophyton mentagrophytes) protein is Exo-beta-D-glucosaminidase ARB_07888.